The chain runs to 511 residues: MKKADILVLDFGSQYTQLIARRLREQGVYAEILPFNVSLADIKAKEPKGIILSGGPASVYATDAYFCDKGIFDLGLPVLGICYGMQLMAHHYKATVAPAGHKEYGKANIEIKKDSALFKNLPKKQTVWMSHSDKVENLPDGFEVLATSENSPFCVFGNEDKKFFALQFHPEVQHSEFGKNILKNFAKYACNCESVWNMGSFAKTQAEKIREEVGNDKVLCAVSGGVDSSVVAALLASAIKEQVIVVFVDNGLLRSGEKEQVEFMFKNTLGIDLISIDASEIFLSRLANVRDPEQKRKIIGNTFIEVFEEEAKKHKDVKYLAQGTLYTDIIESSVVGASKTIKSHHNVGGLPEKMNLKLIEPLKEIFKDEVRALGLELGLSKEVVYRHPFPGPGLAIRIMGEVNRPSLELLRKVDVILLEELKSTGWYDKTWQAFCVLLNVKSVGVMGDNRTYDNAVCIRVVDASDGMTATFSHLPYEVLENISRRIINEVEGINRVVYDISSKPPATIEWE.

Positions 5–195 constitute a Glutamine amidotransferase type-1 domain; it reads DILVLDFGSQ…AKYACNCESV (191 aa). Residue Cys-82 is the Nucleophile of the active site. Residues His-169 and Glu-171 contribute to the active site. A GMPS ATP-PPase domain is found at 196 to 386; the sequence is WNMGSFAKTQ…LGLSKEVVYR (191 aa). Residue 223–229 participates in ATP binding; it reads SGGVDSS.

In terms of assembly, homodimer.

The catalysed reaction is XMP + L-glutamine + ATP + H2O = GMP + L-glutamate + AMP + diphosphate + 2 H(+). It participates in purine metabolism; GMP biosynthesis; GMP from XMP (L-Gln route): step 1/1. In terms of biological role, catalyzes the synthesis of GMP from XMP. This is GMP synthase [glutamine-hydrolyzing] from Campylobacter jejuni subsp. jejuni serotype O:23/36 (strain 81-176).